The sequence spans 291 residues: 33 kDa chaperonin (291 aa).

2 disulfides stabilise this stretch: cysteine 235-cysteine 237 and cysteine 268-cysteine 271.

The protein belongs to the HSP33 family. Post-translationally, under oxidizing conditions two disulfide bonds are formed involving the reactive cysteines. Under reducing conditions zinc is bound to the reactive cysteines and the protein is inactive.

The protein localises to the cytoplasm. Redox regulated molecular chaperone. Protects both thermally unfolding and oxidatively damaged proteins from irreversible aggregation. Plays an important role in the bacterial defense system toward oxidative stress. This is 33 kDa chaperonin from Bacillus subtilis (strain 168).